Here is a 275-residue protein sequence, read N- to C-terminus: 2,3,4,5-tetrahydropyridine-2,6-dicarboxylate N-succinyltransferase (275 aa).

Residues R104 and D141 each contribute to the substrate site.

This sequence belongs to the transferase hexapeptide repeat family. As to quaternary structure, homotrimer.

Its subcellular location is the cytoplasm. It carries out the reaction (S)-2,3,4,5-tetrahydrodipicolinate + succinyl-CoA + H2O = (S)-2-succinylamino-6-oxoheptanedioate + CoA. The protein operates within amino-acid biosynthesis; L-lysine biosynthesis via DAP pathway; LL-2,6-diaminopimelate from (S)-tetrahydrodipicolinate (succinylase route): step 1/3. The polypeptide is 2,3,4,5-tetrahydropyridine-2,6-dicarboxylate N-succinyltransferase (Mannheimia succiniciproducens (strain KCTC 0769BP / MBEL55E)).